The primary structure comprises 269 residues: Diaminopimelate epimerase (269 aa).

Positions 13, 46, and 65 each coordinate substrate. Cys-74 (proton donor) is an active-site residue. Substrate-binding positions include 75–76 (GN), Asn-149, Asn-182, and 200–201 (ER). Cys-209 functions as the Proton acceptor in the catalytic mechanism. 210 to 211 (GT) is a substrate binding site.

It belongs to the diaminopimelate epimerase family. Homodimer.

The protein resides in the cytoplasm. The enzyme catalyses (2S,6S)-2,6-diaminopimelate = meso-2,6-diaminopimelate. It functions in the pathway amino-acid biosynthesis; L-lysine biosynthesis via DAP pathway; DL-2,6-diaminopimelate from LL-2,6-diaminopimelate: step 1/1. Catalyzes the stereoinversion of LL-2,6-diaminopimelate (L,L-DAP) to meso-diaminopimelate (meso-DAP), a precursor of L-lysine and an essential component of the bacterial peptidoglycan. In Zymomonas mobilis subsp. mobilis (strain ATCC 31821 / ZM4 / CP4), this protein is Diaminopimelate epimerase.